The chain runs to 98 residues: NADH-ubiquinone oxidoreductase chain 4L (98 aa).

3 helical membrane passes run 1–21 (MTMV…GLLM), 29–49 (SLLC…VTIL), and 61–81 (IILL…LVMV).

The protein belongs to the complex I subunit 4L family. As to quaternary structure, core subunit of respiratory chain NADH dehydrogenase (Complex I) which is composed of 45 different subunits.

It localises to the mitochondrion inner membrane. The enzyme catalyses a ubiquinone + NADH + 5 H(+)(in) = a ubiquinol + NAD(+) + 4 H(+)(out). Core subunit of the mitochondrial membrane respiratory chain NADH dehydrogenase (Complex I) which catalyzes electron transfer from NADH through the respiratory chain, using ubiquinone as an electron acceptor. Part of the enzyme membrane arm which is embedded in the lipid bilayer and involved in proton translocation. This chain is NADH-ubiquinone oxidoreductase chain 4L (MT-ND4L), found in Neomonachus schauinslandi (Hawaiian monk seal).